Consider the following 484-residue polypeptide: Monocarboxylate transporter 2 (484 aa).

Over 1–16 (MPSEPSAPLPQPLPPD) the chain is Cytoplasmic. Residues 17 to 37 (GGWGWVVVCASFISIGFSYAF) form a helical membrane-spanning segment. At 38 to 60 (PKAVTVFFKDIQEIFNTTSSQIA) the chain is on the extracellular side. A helical membrane pass occupies residues 61-81 (WISSIMLAVMYAGGPISSVLV). At 82 to 90 (NNYGSRPVV) the chain is on the cytoplasmic side. A helical transmembrane segment spans residues 91–111 (IVGGLLCCIGMILASYSNSVI). Residues 112–116 (ELYLT) are Extracellular-facing. The chain crosses the membrane as a helical span at residues 117 to 137 (VGFIGGLGLAFNLQPALTIIG). The Cytoplasmic segment spans residues 138–149 (KYFYRRRPLANG). The helical transmembrane segment at 150–170 (CAMAGSPVFLSTLAPFNQYLF) threads the bilayer. At 171-174 (NNYG) the chain is on the extracellular side. Residues 175 to 195 (WKGSFLILGGIFLHSCVAGCL) form a helical membrane-spanning segment. At 196-245 (MRPVGPSPNTKKSKSKVGSRHDSTLKKASKVSTAQKVNRFLDFSLFMHRG) the chain is on the cytoplasmic side. A helical membrane pass occupies residues 246 to 266 (FLIYLSGNVILFLGIFAPIIF). The Extracellular portion of the chain corresponds to 267 to 281 (LAQYAKHIGVDDYNS). Residues 282–302 (AFLLSVMAFIDMFARPSVGLI) form a helical membrane-spanning segment. The Cytoplasmic portion of the chain corresponds to 303–311 (ANTSLIRPR). Residues 312–332 (IQYLFSSAIIFTGICHLLCPL) form a helical membrane-spanning segment. The Extracellular segment spans residues 333 to 337 (ATTYS). Residues 338–358 (ALVVYVVFFGLGFGSISSLLF) traverse the membrane as a helical segment. Residues 359–372 (ECLMDIVGATRFSS) are Cytoplasmic-facing. Residues 373–393 (AVGLTTIVECCPVLFGPPLAG) form a helical membrane-spanning segment. The Extracellular portion of the chain corresponds to 394-405 (KLLDITGEYKYL). A helical membrane pass occupies residues 406–426 (YIASGTVVLVSGTYLLIGNAI). Topologically, residues 427 to 484 (NYRLLDKERKREKAKKKKSASHASREMEALNRSKQDEVTVKASNAHNPPSDRDKESNI) are cytoplasmic. Residues 438–484 (EKAKKKKSASHASREMEALNRSKQDEVTVKASNAHNPPSDRDKESNI) are disordered. 2 stretches are compositionally biased toward basic and acidic residues: residues 449–465 (ASRE…DEVT) and 475–484 (PSDRDKESNI).

It belongs to the major facilitator superfamily. Monocarboxylate porter (TC 2.A.1.13) family. In terms of assembly, homodimer. Interacts with GRID2IP. Interacts with EMB; interaction mediates SLC16A7 targeting to the plasma membrane. Interacts with isoform 2 of BSG. In terms of tissue distribution, detected in testis and in spermatozoa (at protein level).

It is found in the cell membrane. It localises to the cytoplasm. The protein resides in the basolateral cell membrane. It carries out the reaction (S)-lactate(in) + H(+)(in) = (S)-lactate(out) + H(+)(out). The enzyme catalyses 3-methyl-2-oxobutanoate(out) + H(+)(out) = 3-methyl-2-oxobutanoate(in) + H(+)(in). It catalyses the reaction acetoacetate(out) + H(+)(out) = acetoacetate(in) + H(+)(in). The catalysed reaction is (R)-3-hydroxybutanoate(out) + H(+)(out) = (R)-3-hydroxybutanoate(in) + H(+)(in). It carries out the reaction 4-methyl-2-oxopentanoate(out) + H(+)(out) = 4-methyl-2-oxopentanoate(in) + H(+)(in). The enzyme catalyses pyruvate(out) + H(+)(out) = pyruvate(in) + H(+)(in). It catalyses the reaction (S)-3-hydroxybutanoate(out) + H(+)(out) = (S)-3-hydroxybutanoate(in) + H(+)(in). Its activity is regulated as follows. Transport activity exhibits steep dependence on substrate concentration. Substrate concentration sensitivity of SLC16A7 arises from the strong inter-subunit cooperativity of the SLC16A7 dimer during transport. Inhibited by AR-C155858. Its function is as follows. Proton-coupled monocarboxylate symporter. Catalyzes the rapid transport across the plasma membrane of monocarboxylates such as L-lactate, pyruvate and ketone bodies, acetoacetate, beta-hydroxybutyrate and acetate. Dimerization is functionally required and both subunits work cooperatively in transporting substrate. The protein is Monocarboxylate transporter 2 (Slc16a7) of Mus musculus (Mouse).